The sequence spans 150 residues: Macrodomain Ter protein (150 aa).

It belongs to the MatP family. Homodimer.

It is found in the cytoplasm. Its function is as follows. Required for spatial organization of the terminus region of the chromosome (Ter macrodomain) during the cell cycle. Prevents early segregation of duplicated Ter macrodomains during cell division. Binds specifically to matS, which is a 13 bp signature motif repeated within the Ter macrodomain. In Shigella dysenteriae serotype 1 (strain Sd197), this protein is Macrodomain Ter protein.